We begin with the raw amino-acid sequence, 638 residues long: NBPF family member NBPF4 (638 aa).

Coiled coils occupy residues serine 10 to leucine 43 and aspartate 69 to glutamate 115. A disordered region spans residues histidine 157–asparagine 285. Positions glutamate 165–glutamate 179 are enriched in acidic residues. The 88-residue stretch at glutamate 174–proline 261 folds into the Olduvai 1 domain. Basic and acidic residues predominate over residues glutamate 192–proline 202. Over residues serine 214–histidine 226 the composition is skewed to low complexity. 2 stretches are compositionally biased toward basic and acidic residues: residues threonine 232–aspartate 251 and glutamine 264–lysine 273. Olduvai domains are found at residues glutamate 326–aspartate 399 and lysine 400–glutamine 503. The disordered stretch occupies residues glycine 562–arginine 584.

It belongs to the NBPF family. Expressed in testis.

The protein resides in the cytoplasm. The polypeptide is NBPF family member NBPF4 (Homo sapiens (Human)).